The primary structure comprises 655 residues: NADH-ubiquinone oxidoreductase chain 5 (655 aa).

The next 16 helical transmembrane spans lie at 3–23 (NAIS…LFFG), 34–54 (MTST…YQLL), 84–104 (LTIT…IYSI), 116–136 (FFSL…GSNY), 137–157 (FVLF…ISFW), 180–200 (FFVL…YSTI), 204–224 (AYLI…IAAM), 244–264 (TPVS…YLLL), 276–296 (VLFI…LIAI), 304–322 (IIAL…AIGL), 332–354 (LLGH…HSIL), 370–390 (LPYT…MPGL), 413–433 (VVYW…MKIL), 456–476 (IYIT…GWIL), 516–536 (ISAI…AIVF), and 629–649 (LLLV…LISI).

It belongs to the complex I subunit 5 family. In terms of assembly, complex I is composed of 37 different subunits.

The protein resides in the mitochondrion inner membrane. It catalyses the reaction a ubiquinone + NADH + 5 H(+)(in) = a ubiquinol + NAD(+) + 4 H(+)(out). In terms of biological role, core subunit of the mitochondrial membrane respiratory chain NADH dehydrogenase (Complex I) that is believed to belong to the minimal assembly required for catalysis. Complex I functions in the transfer of electrons from NADH to the respiratory chain. The immediate electron acceptor for the enzyme is believed to be ubiquinone. This chain is NADH-ubiquinone oxidoreductase chain 5 (ND5), found in Yarrowia lipolytica (strain CLIB 122 / E 150) (Yeast).